The following is a 103-amino-acid chain: Non-histone chromosomal protein 6 (103 aa).

2 disordered regions span residues 1 to 30 (MPKA…KRGL) and 70 to 103 (KQRA…EESS). A DNA-binding region (HMG box) is located at residues 26-94 (PKRGLSAYMF…RYEDEKQAYN (69 aa)). A compositionally biased stretch (basic and acidic residues) spans 70 to 91 (KQRAPYEAKAAADKKRYEDEKQ).

This sequence belongs to the NHP6 family. As to quaternary structure, weakly associates with the stable heterodimer of ctc-1/pob3 and ctc-2/spt16 to form the FACT complex.

The protein resides in the nucleus. It is found in the chromosome. DNA-binding protein that induces severe bending of DNA. Required for DNA-binding by the FACT complex, a general chromatin factor that acts to reorganize nucleosomes. The FACT complex is involved in multiple processes that require DNA as a template such as mRNA elongation, DNA replication and DNA repair. Also augments the fidelity of transcription by RNA polymerase III independently of any role in the FACT complex. The chain is Non-histone chromosomal protein 6 (nhp-1) from Neurospora crassa (strain ATCC 24698 / 74-OR23-1A / CBS 708.71 / DSM 1257 / FGSC 987).